Reading from the N-terminus, the 583-residue chain is Putative glutaminase 3 (583 aa).

The interval 1–29 is disordered; sequence MDNKEKEDEELSDELKDQPGPSEKPRTPT. Residues Ser216, Asn265, Glu311, Asn318, Tyr344, Tyr396, and Val414 each contribute to the substrate site. ANK repeat units follow at residues 482–514, 515–548, and 549–581; these read DGQN…CKDY, DDRT…PCDR, and YDRT…LKGQ.

It belongs to the glutaminase family.

The catalysed reaction is L-glutamine + H2O = L-glutamate + NH4(+). This chain is Putative glutaminase 3 (glna-3), found in Caenorhabditis elegans.